The chain runs to 175 residues: Anterior gradient protein 2 homolog (175 aa).

The signal sequence occupies residues 1 to 20 (MEKIPVSAFLLLVALSYTLA). The required to promote cell adhesion stretch occupies residues 21–40 (RDTTVKPGAKKDTKDSRPKL). Short sequence motifs (homodimer stabilization; interchain) lie at residues 45–54 (SRGWGDQLIW) and 60–67 (EALYKSKT).

This sequence belongs to the AGR family. As to quaternary structure, monomer and homodimer. Interacts with LYPD3 and DAG1 (alphaDAG1). Interacts with MUC2; disulfide-linked. Expressed strongly in trachea, lung, stomach, colon, prostate and small intestine. Expressed weakly in pituitary gland, salivary gland, mammary gland, bladder, appendix, ovary, fetal lung, uterus, pancreas, kidney, fetal kidney, testis, placenta, thyroid gland and in estrogen receptor (ER)-positive breast cancer cell lines.

The protein resides in the secreted. It is found in the endoplasmic reticulum. In terms of biological role, required for MUC2 post-transcriptional synthesis and secretion. May play a role in the production of mucus by intestinal cells. Proto-oncogene that may play a role in cell migration, cell differentiation and cell growth. Promotes cell adhesion. The chain is Anterior gradient protein 2 homolog (AGR2) from Homo sapiens (Human).